The primary structure comprises 335 residues: tRNA N6-adenosine threonylcarbamoyltransferase (335 aa).

Fe cation is bound by residues H110 and H114. Substrate contacts are provided by residues 132–136, D165, G178, and N271; that span reads LVSGG. D299 provides a ligand contact to Fe cation.

It belongs to the KAE1 / TsaD family. Fe(2+) is required as a cofactor.

It localises to the cytoplasm. It carries out the reaction L-threonylcarbamoyladenylate + adenosine(37) in tRNA = N(6)-L-threonylcarbamoyladenosine(37) in tRNA + AMP + H(+). Functionally, required for the formation of a threonylcarbamoyl group on adenosine at position 37 (t(6)A37) in tRNAs that read codons beginning with adenine. Is involved in the transfer of the threonylcarbamoyl moiety of threonylcarbamoyl-AMP (TC-AMP) to the N6 group of A37, together with TsaE and TsaB. TsaD likely plays a direct catalytic role in this reaction. The sequence is that of tRNA N6-adenosine threonylcarbamoyltransferase from Campylobacter jejuni subsp. doylei (strain ATCC BAA-1458 / RM4099 / 269.97).